We begin with the raw amino-acid sequence, 246 residues long: Probable transcriptional regulatory protein YebC (246 aa).

The tract at residues 1–20 (MAGHSKWANTRHRKAAQDAK) is disordered.

This sequence belongs to the TACO1 family.

The protein resides in the cytoplasm. The protein is Probable transcriptional regulatory protein YebC of Escherichia coli O6:K15:H31 (strain 536 / UPEC).